The sequence spans 110 residues: Small heat shock protein hspG11 (110 aa).

A sHSP domain is found at Lys-30–Arg-110. A disordered region spans residues Lys-78 to Arg-110. The span at Asn-85–Asn-96 shows a compositional bias: low complexity. A compositionally biased stretch (polar residues) spans Lys-101–Arg-110.

It belongs to the small heat shock protein (HSP20) family.

The protein is Small heat shock protein hspG11 (hspG11) of Dictyostelium discoideum (Social amoeba).